A 124-amino-acid chain; its full sequence is Small ribosomal subunit protein uS12 (124 aa).

The segment at 1 to 28 (MPTIQQLIRTERQSSKAKTKSPALKSCP) is disordered. A 3-methylthioaspartic acid modification is found at aspartate 89. Residues 104–124 (TAGVKDRRQSRSKYGAKTPKE) are disordered.

This sequence belongs to the universal ribosomal protein uS12 family. Part of the 30S ribosomal subunit. Contacts proteins S8 and S17. May interact with IF1 in the 30S initiation complex.

Functionally, with S4 and S5 plays an important role in translational accuracy. In terms of biological role, interacts with and stabilizes bases of the 16S rRNA that are involved in tRNA selection in the A site and with the mRNA backbone. Located at the interface of the 30S and 50S subunits, it traverses the body of the 30S subunit contacting proteins on the other side and probably holding the rRNA structure together. The combined cluster of proteins S8, S12 and S17 appears to hold together the shoulder and platform of the 30S subunit. The polypeptide is Small ribosomal subunit protein uS12 (Synechococcus sp. (strain WH7803)).